The following is a 228-amino-acid chain: Lipoprotein LpqN (228 aa).

The signal sequence occupies residues 1 to 19; that stretch reads MKHFTAAVATVALSLALAG. The N-palmitoyl cysteine moiety is linked to residue cysteine 20. A lipid anchor (S-diacylglycerol cysteine) is attached at cysteine 20. Residues 26–53 are disordered; that stretch reads TDSAPTTSPTTTSPTTSTTTTSATTSAQ. Positions 28–52 are enriched in low complexity; sequence SAPTTSPTTTSPTTSTTTTSATTSA.

In terms of assembly, interacts with the periplasmic loop domains of the mycolate transporters MmpL3 and MmpL11. Also interacts with secreted cell envelope biosynthetic enzymes such as Ag85A. These interactions are weak and may require a putative mycobacterial adapter protein or molecule. Interacts with human ubiquitin ligase CBL.

The protein localises to the cell membrane. It localises to the secreted. Involved in cell envelope biogenesis. May act as a membrane fusion protein, connecting MmpL transporters with periplasmic proteins, and play a role in cell envelope lipid changes during biofilm maturation. Its function is as follows. Is also a virulence factor required for intracellular survival. Associates with CBL, a host ubiquitin ligase, and probably blocks the normal functions of CBL and disturbs CBL-mediated antibacterial activity. Interaction counteracts antibacterial defense but causes a reciprocal enhancement of antiviral defense. The protein is Lipoprotein LpqN of Mycobacterium tuberculosis (strain ATCC 25618 / H37Rv).